A 456-amino-acid chain; its full sequence is Bifunctional protein GlmU (456 aa).

The pyrophosphorylase stretch occupies residues Met-1–Arg-229. UDP-N-acetyl-alpha-D-glucosamine contacts are provided by residues Leu-11–Gly-14, Lys-25, Gln-76, Gly-81–Thr-82, Tyr-103–Asp-105, Gly-140, Glu-154, Asn-169, and Asn-227. Asp-105 is a Mg(2+) binding site. Asn-227 contributes to the Mg(2+) binding site. The linker stretch occupies residues Leu-230 to Ser-250. Residues Gly-251 to Lys-456 are N-acetyltransferase. UDP-N-acetyl-alpha-D-glucosamine is bound by residues Arg-333 and Lys-351. His-363 (proton acceptor) is an active-site residue. Residues Tyr-366 and Asn-377 each contribute to the UDP-N-acetyl-alpha-D-glucosamine site. Residues Ala-380, Asn-386–Tyr-387, Ser-405, Ala-423, and Arg-440 each bind acetyl-CoA.

It in the N-terminal section; belongs to the N-acetylglucosamine-1-phosphate uridyltransferase family. In the C-terminal section; belongs to the transferase hexapeptide repeat family. As to quaternary structure, homotrimer. Mg(2+) is required as a cofactor.

The protein resides in the cytoplasm. It catalyses the reaction alpha-D-glucosamine 1-phosphate + acetyl-CoA = N-acetyl-alpha-D-glucosamine 1-phosphate + CoA + H(+). The enzyme catalyses N-acetyl-alpha-D-glucosamine 1-phosphate + UTP + H(+) = UDP-N-acetyl-alpha-D-glucosamine + diphosphate. The protein operates within nucleotide-sugar biosynthesis; UDP-N-acetyl-alpha-D-glucosamine biosynthesis; N-acetyl-alpha-D-glucosamine 1-phosphate from alpha-D-glucosamine 6-phosphate (route II): step 2/2. It participates in nucleotide-sugar biosynthesis; UDP-N-acetyl-alpha-D-glucosamine biosynthesis; UDP-N-acetyl-alpha-D-glucosamine from N-acetyl-alpha-D-glucosamine 1-phosphate: step 1/1. Its pathway is bacterial outer membrane biogenesis; LPS lipid A biosynthesis. Catalyzes the last two sequential reactions in the de novo biosynthetic pathway for UDP-N-acetylglucosamine (UDP-GlcNAc). The C-terminal domain catalyzes the transfer of acetyl group from acetyl coenzyme A to glucosamine-1-phosphate (GlcN-1-P) to produce N-acetylglucosamine-1-phosphate (GlcNAc-1-P), which is converted into UDP-GlcNAc by the transfer of uridine 5-monophosphate (from uridine 5-triphosphate), a reaction catalyzed by the N-terminal domain. This Salmonella schwarzengrund (strain CVM19633) protein is Bifunctional protein GlmU.